The sequence spans 95 residues: Small ribosomal subunit protein bS20 (95 aa).

Belongs to the bacterial ribosomal protein bS20 family.

Binds directly to 16S ribosomal RNA. The polypeptide is Small ribosomal subunit protein bS20 (Ehrlichia canis (strain Jake)).